The chain runs to 355 residues: Protein RecA (355 aa).

65-72 (GPESSGKT) contributes to the ATP binding site.

The protein belongs to the RecA family.

The protein resides in the cytoplasm. Can catalyze the hydrolysis of ATP in the presence of single-stranded DNA, the ATP-dependent uptake of single-stranded DNA by duplex DNA, and the ATP-dependent hybridization of homologous single-stranded DNAs. It interacts with LexA causing its activation and leading to its autocatalytic cleavage. The chain is Protein RecA from Pseudomonas putida (strain W619).